A 336-amino-acid polypeptide reads, in one-letter code: Dihydroorotate dehydrogenase (quinone) (336 aa).

FMN-binding positions include 62–66 (AGLDK) and T86. K66 provides a ligand contact to substrate. Position 111-115 (111-115 (NRMGF)) interacts with substrate. N139 and N172 together coordinate FMN. Residue N172 coordinates substrate. The active-site Nucleophile is S175. Residue N177 coordinates substrate. The FMN site is built by K217 and T245. 246–247 (NT) contacts substrate. FMN contacts are provided by residues G268, G297, and 318–319 (YS).

The protein belongs to the dihydroorotate dehydrogenase family. Type 2 subfamily. As to quaternary structure, monomer. Requires FMN as cofactor.

It is found in the cell membrane. It catalyses the reaction (S)-dihydroorotate + a quinone = orotate + a quinol. It functions in the pathway pyrimidine metabolism; UMP biosynthesis via de novo pathway; orotate from (S)-dihydroorotate (quinone route): step 1/1. Catalyzes the conversion of dihydroorotate to orotate with quinone as electron acceptor. This Shigella flexneri serotype 5b (strain 8401) protein is Dihydroorotate dehydrogenase (quinone).